The following is a 59-amino-acid chain: Large ribosomal subunit protein bL32 (59 aa).

Belongs to the bacterial ribosomal protein bL32 family.

This Rhizorhabdus wittichii (strain DSM 6014 / CCUG 31198 / JCM 15750 / NBRC 105917 / EY 4224 / RW1) (Sphingomonas wittichii) protein is Large ribosomal subunit protein bL32.